We begin with the raw amino-acid sequence, 276 residues long: Diaminopimelate epimerase (276 aa).

The substrate site is built by N13, Q46, and N66. C75 (proton donor) is an active-site residue. Substrate-binding positions include 76–77 (GN), N159, N192, and 210–211 (ER). Catalysis depends on C219, which acts as the Proton acceptor. 220–221 (GT) contacts substrate.

This sequence belongs to the diaminopimelate epimerase family. In terms of assembly, homodimer.

It localises to the cytoplasm. The catalysed reaction is (2S,6S)-2,6-diaminopimelate = meso-2,6-diaminopimelate. The protein operates within amino-acid biosynthesis; L-lysine biosynthesis via DAP pathway; DL-2,6-diaminopimelate from LL-2,6-diaminopimelate: step 1/1. Functionally, catalyzes the stereoinversion of LL-2,6-diaminopimelate (L,L-DAP) to meso-diaminopimelate (meso-DAP), a precursor of L-lysine and an essential component of the bacterial peptidoglycan. The protein is Diaminopimelate epimerase of Ectopseudomonas mendocina (strain ymp) (Pseudomonas mendocina).